A 369-amino-acid chain; its full sequence is Flagellar P-ring protein (369 aa).

An N-terminal signal peptide occupies residues 1–22 (MTKFKHLLALAALLLAAGAAQA).

This sequence belongs to the FlgI family. As to quaternary structure, the basal body constitutes a major portion of the flagellar organelle and consists of four rings (L,P,S, and M) mounted on a central rod.

The protein resides in the periplasm. It is found in the bacterial flagellum basal body. Its function is as follows. Assembles around the rod to form the L-ring and probably protects the motor/basal body from shearing forces during rotation. The polypeptide is Flagellar P-ring protein (Pseudomonas aeruginosa (strain LESB58)).